Reading from the N-terminus, the 398-residue chain is Isochorismate synthase DhbC (398 aa).

S271 carries the post-translational modification Phosphoserine.

The protein belongs to the isochorismate synthase family.

It carries out the reaction chorismate = isochorismate. Its pathway is siderophore biosynthesis; bacillibactin biosynthesis. This is Isochorismate synthase DhbC (dhbC) from Bacillus subtilis (strain 168).